Here is a 242-residue protein sequence, read N- to C-terminus: Probable transcriptional regulatory protein NGK_1508 (242 aa).

Belongs to the TACO1 family.

Its subcellular location is the cytoplasm. The protein is Probable transcriptional regulatory protein NGK_1508 of Neisseria gonorrhoeae (strain NCCP11945).